A 251-amino-acid chain; its full sequence is Probable transcriptional regulatory protein PMI1113 (251 aa).

It belongs to the TACO1 family.

The protein resides in the cytoplasm. This is Probable transcriptional regulatory protein PMI1113 from Proteus mirabilis (strain HI4320).